Reading from the N-terminus, the 215-residue chain is Small ribosomal subunit protein bS6 (215 aa).

Disordered stretches follow at residues 121-153 (RENN…QKPK) and 187-215 (NQRQ…KDKQ). Positions 144-153 (SRTEKAQKPK) are enriched in basic and acidic residues. Residues 188–198 (QRQNQQNNNNN) are compositionally biased toward low complexity. The span at 199–215 (RFDRNRNRQHNRFKDKQ) shows a compositional bias: basic and acidic residues.

It belongs to the bacterial ribosomal protein bS6 family.

Its function is as follows. Binds together with bS18 to 16S ribosomal RNA. This is Small ribosomal subunit protein bS6 (rpsF) from Mycoplasma pneumoniae (strain ATCC 29342 / M129 / Subtype 1) (Mycoplasmoides pneumoniae).